The following is a 320-amino-acid chain: Probable cell division protein WhiA (320 aa).

Residues 282–315 (SLEELGRAARPQISKDAVAGRIRRLLQRAEKAEQ) constitute a DNA-binding region (H-T-H motif).

It belongs to the WhiA family.

Involved in cell division and chromosome segregation. In Bifidobacterium animalis subsp. lactis (strain AD011), this protein is Probable cell division protein WhiA.